The sequence spans 100 residues: Large ribosomal subunit protein uL23 (100 aa).

This sequence belongs to the universal ribosomal protein uL23 family. As to quaternary structure, part of the 50S ribosomal subunit. Contacts protein L29, and trigger factor when it is bound to the ribosome.

One of the early assembly proteins it binds 23S rRNA. One of the proteins that surrounds the polypeptide exit tunnel on the outside of the ribosome. Forms the main docking site for trigger factor binding to the ribosome. The chain is Large ribosomal subunit protein uL23 from Aeromonas hydrophila subsp. hydrophila (strain ATCC 7966 / DSM 30187 / BCRC 13018 / CCUG 14551 / JCM 1027 / KCTC 2358 / NCIMB 9240 / NCTC 8049).